A 97-amino-acid chain; its full sequence is Co-chaperonin GroES (97 aa).

The protein belongs to the GroES chaperonin family. In terms of assembly, heptamer of 7 subunits arranged in a ring. Interacts with the chaperonin GroEL.

Its subcellular location is the cytoplasm. Functionally, together with the chaperonin GroEL, plays an essential role in assisting protein folding. The GroEL-GroES system forms a nano-cage that allows encapsulation of the non-native substrate proteins and provides a physical environment optimized to promote and accelerate protein folding. GroES binds to the apical surface of the GroEL ring, thereby capping the opening of the GroEL channel. The chain is Co-chaperonin GroES from Aeromonas hydrophila subsp. hydrophila (strain ATCC 7966 / DSM 30187 / BCRC 13018 / CCUG 14551 / JCM 1027 / KCTC 2358 / NCIMB 9240 / NCTC 8049).